Reading from the N-terminus, the 115-residue chain is Small nuclear ribonucleoprotein Sm D2 (115 aa).

The 86-residue stretch at 30-115 (LSVLQQAVKN…VVLVVRIPSA (86 aa)) folds into the Sm domain.

This sequence belongs to the snRNP core protein family. As to quaternary structure, belongs to the 40S cdc5-associated complex (or cwf complex), a spliceosome sub-complex reminiscent of a late-stage spliceosome composed of the U2, U5 and U6 snRNAs and at least brr2, cdc5, cwf2/prp3, cwf3/syf1, cwf4/syf3, cwf5/ecm2, spp42/cwf6, cwf7/spf27, cwf8, cwf9, cwf10, cwf11, cwf12, prp45/cwf13, cwf14, cwf15, cwf16, cwf17, cwf18, cwf19, cwf20, cwf21, cwf22, cwf23, cwf24, cwf25, cwf26, cyp7/cwf27, cwf28, cwf29/ist3, lea1, msl1, prp5/cwf1, prp10, prp12/sap130, prp17, prp22, sap61, sap62, sap114, sap145, slu7, smb1, smd1, smd3, smf1, smg1 and syf2.

The protein localises to the nucleus. Its subcellular location is the cytoplasm. It is found in the cytosol. Its function is as follows. Plays a role in pre-mRNA splicing as a core component of the spliceosomal U1, U2, U4 and U5 small nuclear ribonucleoproteins (snRNPs), the building blocks of the spliceosome. The protein is Small nuclear ribonucleoprotein Sm D2 (smd2) of Schizosaccharomyces pombe (strain 972 / ATCC 24843) (Fission yeast).